The primary structure comprises 356 residues: Nicotinate-nucleotide--dimethylbenzimidazole phosphoribosyltransferase (356 aa).

Glu317 (proton acceptor) is an active-site residue.

The protein belongs to the CobT family. As to quaternary structure, homodimer.

It carries out the reaction 5,6-dimethylbenzimidazole + nicotinate beta-D-ribonucleotide = alpha-ribazole 5'-phosphate + nicotinate + H(+). It functions in the pathway nucleoside biosynthesis; alpha-ribazole biosynthesis; alpha-ribazole from 5,6-dimethylbenzimidazole: step 1/2. Catalyzes the synthesis of alpha-ribazole-5'-phosphate from nicotinate mononucleotide (NAMN) and 5,6-dimethylbenzimidazole (DMB). The polypeptide is Nicotinate-nucleotide--dimethylbenzimidazole phosphoribosyltransferase (Salmonella typhi).